Here is a 313-residue protein sequence, read N- to C-terminus: D-beta-D-heptose 7-phosphate kinase (313 aa).

Residue 196-199 participates in ATP binding; that stretch reads NRAE. D264 is an active-site residue.

The catalysed reaction is D-glycero-beta-D-manno-heptose 7-phosphate + ATP = D-glycero-beta-D-manno-heptose 1,7-bisphosphate + ADP + H(+). The protein operates within nucleotide-sugar biosynthesis; ADP-L-glycero-beta-D-manno-heptose biosynthesis; ADP-L-glycero-beta-D-manno-heptose from D-glycero-beta-D-manno-heptose 7-phosphate: step 1/4. It functions in the pathway bacterial outer membrane biogenesis; LPS core biosynthesis. Catalyzes the phosphorylation of D-glycero-D-manno-heptose 7-phosphate at the C-1 position to selectively form D-glycero-beta-D-manno-heptose-1,7-bisphosphate. This chain is D-beta-D-heptose 7-phosphate kinase (rfaE), found in Bordetella bronchiseptica (strain ATCC BAA-588 / NCTC 13252 / RB50) (Alcaligenes bronchisepticus).